The chain runs to 364 residues: C3a anaphylatoxin chemotactic receptor (364 aa).

The Extracellular portion of the chain corresponds to 1-50; the sequence is MGDNMDFSEHYGNFSENYVTESYGEFDLYYDPLNETSLSEQGHRSIWVLS. Residues Asn13 and Asn34 are each glycosylated (N-linked (GlcNAc...) asparagine). Residues 51–71 form a helical membrane-spanning segment; the sequence is IVLCSIACVLGITGNAFVIWI. The Cytoplasmic portion of the chain corresponds to 72–82; the sequence is AGVKMKRTVNT. A helical membrane pass occupies residues 83–103; that stretch reads IWFVNLAAADLLCCVSIPFSI. Over 104–120 the chain is Extracellular; the sequence is ADIILNSHWPYGEAMCK. A disulfide bridge links Cys119 with Cys198. A helical membrane pass occupies residues 121 to 141; it reads ILPSMVVLNMFASVFTLVLIS. Residues 142–159 lie on the Cytoplasmic side of the membrane; that stretch reads LDRFALVILPVWAQNHRS. A helical transmembrane segment spans residues 160–180; sequence ITLAWLLCGLVWVLGLLLSLP. Topologically, residues 181–220 are extracellular; that stretch reads SMIYREIVVHDDMNITLCIYNHLQDKTEGNQSAIKAIHVT. A helical transmembrane segment spans residues 221–241; sequence RLILGFLIPLLVIAVCYLLIG. At 242–256 the chain is on the cytoplasmic side; the sequence is RRVSSGRFKSQRAFQ. Residues 257-277 form a helical membrane-spanning segment; the sequence is IILVVVTTFFVCWLPYHVIGL. Residues 278 to 295 are Extracellular-facing; it reads VIEYGKEASQVMARALDP. Residues 296–316 form a helical membrane-spanning segment; that stretch reads LAISLAYVNSCLNPVLYVFMG. At 317 to 364 the chain is on the cytoplasmic side; that stretch reads QDFKERVRVSLRKIFEKVFSEDVTLRSSVYSKGQSQLSRATNSSEAQV.

Belongs to the G-protein coupled receptor 1 family.

It is found in the cell membrane. Functionally, receptor for the chemotactic and inflammatory peptide anaphylatoxin C3a. This receptor stimulates chemotaxis, granule enzyme release and superoxide anion production. In Oncorhynchus mykiss (Rainbow trout), this protein is C3a anaphylatoxin chemotactic receptor (c3ar1).